Reading from the N-terminus, the 2566-residue chain is Highly reducing polyketide synthase verA (2566 aa).

The Ketosynthase family 3 (KS3) domain maps to 3–440; that stretch reads PEPIAIIGTG…GTNAHAILES (438 aa). The interval 35 to 61 is disordered; that stretch reads VASEPPSTRFDNRSFYDPDPSHPGTTN. Residues 44-54 are compositionally biased toward basic and acidic residues; sequence FDNRSFYDPDP. Catalysis depends on for beta-ketoacyl synthase activity residues Cys-176, His-316, and His-360. A malonyl-CoA:ACP transacylase (MAT) domain region spans residues 554–880; it reads IFTGQGAQWP…IGLSNRGASG (327 aa). Ser-648 functions as the For malonyltransferase activity in the catalytic mechanism. Positions 950-1081 are N-terminal hotdog fold; sequence HPLLGSLEAD…GKLLICWGNP (132 aa). Residues 950–1246 form a dehydratase (DH) domain region; sequence HPLLGSLEAD…EGVHISPLGP (297 aa). A PKS/mFAS DH domain is found at 950–1250; it reads HPLLGSLEAD…ISPLGPPDRQ (301 aa). The active-site Proton acceptor; for dehydratase activity is the His-982. The segment at 1096–1250 is C-terminal hotdog fold; it reads AGAVDIKDFY…ISPLGPPDRQ (155 aa). Asp-1156 serves as the catalytic Proton donor; for dehydratase activity. The tract at residues 1386–1581 is methyltransferase (CMet) domain; sequence DVLSRFYKED…TGFGGIDTIT (196 aa). The segment at 2127 to 2294 is ketoreductase (KR) domain; sequence KTYLLVGMTG…RRARNIVGSI (168 aa). The Carrier domain maps to 2411–2489; it reads EAAEIVAAGL…ALTADSVSKL (79 aa). Ser-2449 carries the post-translational modification O-(pantetheine 4'-phosphoryl)serine. The disordered stretch occupies residues 2505-2540; it reads KDVSGLTSPPEVPSDASRSSVSSGMDEIVTPESPSF. Residues 2518-2527 show a composition bias toward low complexity; that stretch reads SDASRSSVSS.

Pantetheine 4'-phosphate serves as cofactor.

The protein operates within secondary metabolite biosynthesis; terpenoid biosynthesis. It functions in the pathway mycotoxin biosynthesis. In terms of biological role, highly reducing polyketide synthase (HR-PKS); part of the gene cluster that mediates the biosynthesis of the neurotoxin verrucosidin, a methylated alpha-pyrone polyketide that inhibits oxidative phosphorylation in mitochondria and thereby causes neurological diseases. The carbon backbone of verrucosidin is synthesized by the HR-PKS verA, and further modified by the other verrucodidin cluster enzymes. This is Highly reducing polyketide synthase verA from Penicillium polonicum.